A 775-amino-acid chain; its full sequence is Kojibiose phosphorylase (775 aa).

A substrate-binding site is contributed by Trp361–Asp362. Glu501 acts as the Proton donor in catalysis. Position 614 to 615 (Lys614 to Gln615) interacts with substrate.

This sequence belongs to the glycosyl hydrolase 65 family. In terms of assembly, homohexamer.

The catalysed reaction is kojibiose + phosphate = beta-D-glucose 1-phosphate + D-glucose. Inhibited by Hg(2+) and Pb(2+). Functionally, catalyzes the reversible phosphorolysis of kojibiose into beta-D-glucose 1-phosphate (Glc1P) and D-glucose. Can act with alpha-1,2-oligoglucans, such as selaginose, but more slowly. Inactive when disaccharides with linkages other than alpha-1,2 linkages, such as sophorose, trehalose, neotrehalose, nigerose, laminaribiose, maltose, cellobiose, isomaltose, gentiobiose, sucrose and lactose, are used as substrates. In contrast, shows broad specificity for the reverse reaction. Various monosaccharides and disaccharides having a glucosyl residue at the non-reducing end are effective acceptors. This Thermoanaerobacter brockii (Thermoanaerobium brockii) protein is Kojibiose phosphorylase.